Consider the following 959-residue polypeptide: Nucleoporin NUP100/NSP100 (959 aa).

The tract at residues 1–104 is disordered; that stretch reads MFGNNRPMFG…NSSNASNGNT (104 aa). FG repeat units lie at residues 2–3, 9–10, and G17; these read FG. Residues 12–36 are compositionally biased toward polar residues; the sequence is SNLSFGSNTSSFGGQQSQQPNSLFG. Residues 21-24 form an SLFG 1; approximate repeat; that stretch reads SSFG. The stretch at 33–36 is one SLFG 2 repeat; it reads SLFG. Residues 37–48 are compositionally biased toward low complexity; it reads NSNNNNNSTSNN. Residues 51-54 form an SLFG 3; approximate repeat; it reads SGFG. Low complexity-rich tracts occupy residues 56–81 and 92–104; these read FTSA…AFGQ and GSLN…NGNT. Residues 66–69 form an SLFG 4 repeat; the sequence is SLFG. The stretch at 77–80 is one GLFG 1; approximate repeat; the sequence is GAFG. One copy of the SLFG 5; approximate repeat lies at 89–92; that stretch reads SPFG. The stretch at 105 to 106 is one FG 4 repeat; the sequence is FG. One copy of the GLFG 2; approximate repeat lies at 112–115; the sequence is GSFG. Over residues 121 to 136 the composition is skewed to low complexity; the sequence is AFNNNSNSTNSPFGFN. A disordered region spans residues 121–172; that stretch reads AFNNNSNSTNSPFGFNKPNTGGTLFGSQNNNSAGTSSLFGGQSTSTTGTFGN. Residues 131–134 form an SLFG 6; approximate repeat; that stretch reads SPFG. A compositionally biased stretch (polar residues) spans 137–153; it reads KPNTGGTLFGSQNNNSA. The FG 5 repeat unit spans residues 145-146; that stretch reads FG. Residues 154-172 show a composition bias toward low complexity; that stretch reads GTSSLFGGQSTSTTGTFGN. An SLFG 7 repeat occupies 157-160; the sequence is SLFG. One copy of the GLFG 3; approximate repeat lies at 168–171; it reads GTFG. The stretch at 175–178 is one SLFG 8; approximate repeat; the sequence is SSFG. The FG 6 repeat unit spans residues 189-190; sequence FG. The tract at residues 190–394 is disordered; that stretch reads GAGNNSQSNT…NNQQQQSTGL (205 aa). Polar residues predominate over residues 192-245; sequence GNNSQSNTTGSLFGNQQSSAFGTNNQQGSLFGQQSQNTNNAFGNQNQLGGSSFG. One copy of the SLFG 9 repeat lies at 202–205; sequence SLFG. The stretch at 210-213 is one SLFG 10; approximate repeat; sequence SAFG. The SLFG 11 repeat unit spans residues 220–223; the sequence is SLFG. One copy of the FG 7 repeat lies at 233-234; it reads FG. One copy of the SLFG 12; approximate repeat lies at 242–245; the sequence is SSFG. The SLFG 13 repeat unit spans residues 253-256; it reads SLFG. The span at 259 to 293 shows a compositional bias: low complexity; sequence NNTLGNTTNNRNGLFGQMNSSNQGSSNSGLFGQNS. GLFG repeat units lie at residues 271-274 and 287-290; these read GLFG. Positions 294 to 303 are enriched in polar residues; sequence MNSSTQGVFG. The stretch at 300-303 is one GLFG 6; approximate repeat; it reads GVFG. The span at 304 to 317 shows a compositional bias: low complexity; that stretch reads QNNNQMQINGNNNN. Residues 318–321 form an SLFG 14 repeat; sequence SLFG. GLFG repeat units lie at residues 333–336, 345–348, 358–361, 379–382, and 393–396; these read GLFG. A compositionally biased stretch (low complexity) spans 336 to 352; sequence GQNNQQQGSGLFGQNSQ. Polar residues predominate over residues 353 to 377; that stretch reads TSGSSGLFGQNNQKQPNTFTQSNTG. SLFG repeat units lie at residues 405–408, 417–420, and 436–439; these read SLFG. One copy of the FG 8 repeat lies at 448-449; sequence FG. One copy of the SLFG 18 repeat lies at 462-465; it reads SLFG. The SLFG 19; approximate repeat unit spans residues 474 to 477; sequence SLFG. 3 GLFG repeats span residues 490–493, 506–509, and 523–526; these read GLFG. One copy of the FG 9 repeat lies at 542-543; that stretch reads FG. Residues 550-553 form a GLFG 15 repeat; that stretch reads GLFG. An FG 10 repeat occupies 569–570; sequence FG. Disordered stretches follow at residues 672 to 697 and 745 to 794; these read TLER…LNSN and DDQA…PMIE. Residues 679–697 are compositionally biased toward polar residues; that stretch reads GSSTSNSITDPESSYLNSN. A compositionally biased stretch (basic and acidic residues) spans 757 to 775; the sequence is LTEKAHSPQTDLKDDHDES. A phosphoserine mark is found at S763 and S783. Residues 777–790 are compositionally biased toward polar residues; the sequence is PDPQSKSPNGSTSI. A Peptidase S59 domain is found at 814-956; that stretch reads KNNYYISPSI…GTYSYTIDHP (143 aa). A nucleoporin RNA-binding motif (NRM) region spans residues 816 to 955; it reads NYYISPSIET…TGTYSYTIDH (140 aa).

This sequence belongs to the nucleoporin GLFG family. As to quaternary structure, component of the nuclear pore complex (NPC). NPC constitutes the exclusive means of nucleocytoplasmic transport. NPCs allow the passive diffusion of ions and small molecules and the active, nuclear transport receptor-mediated bidirectional transport of macromolecules such as proteins, RNAs, ribonucleoparticles (RNPs), and ribosomal subunits across the nuclear envelope. Due to its 8-fold rotational symmetry, all subunits are present with 8 copies or multiples thereof. Through its FG repeats NUP100 interacts with numerous karyopherins including KAP95, and MEX67.

It is found in the nucleus. The protein resides in the nuclear pore complex. The protein localises to the nucleus membrane. In terms of biological role, functions as a component of the nuclear pore complex (NPC). NPC components, collectively referred to as nucleoporins (NUPs), can play the role of both NPC structural components and of docking or interaction partners for transiently associated nuclear transport factors. Active directional transport is assured by both, a Phe-Gly (FG) repeat affinity gradient for these transport factors across the NPC and a transport cofactor concentration gradient across the nuclear envelope (GSP1 and GSP2 GTPases associated predominantly with GTP in the nucleus, with GDP in the cytoplasm). NUP100 plays an important role in several nuclear export and import pathways including poly(A)+ RNA and protein transport. The chain is Nucleoporin NUP100/NSP100 (NUP100) from Saccharomyces cerevisiae (strain ATCC 204508 / S288c) (Baker's yeast).